A 524-amino-acid chain; its full sequence is MDPHGALFFYLCLLAAQVVLVETLSDLLVLMKRLEQPVGRGLSSRARHIHSLEQKLLNASFGGHNLTLQTNSIQSLVFKLSCDFPGLSLSSTTLTNVSQVRAPHAMQFPAELTKGACVTSRPAELRLICIYFFTAHLFQDDRNSSLLNNYVLGAQLDHRPVNNLQKPVNISFWHNRSLEGYTVSCVFWKEGASKSSWGAWSPEGCYTEQPSATQVLCHCNHLTYFAVLMQLSGDPVPAELQVPLEYISFVGCSISIVASLLTILLYAQSRKQSDSTTRIHMNLNGSVLLLNVTFLLSSQMTLPTMPRPVCKVLAAVLHYALLSSLTWMAIEGFNLYLFLGRVYNAYIRRYLLKLCMLGWGFPALLVLLLLMIKSSVYGPCVTSLSKSQENGTGFQNVSMCWIRSPMVHSILVMGYGGFTSLFNLVVLAWALWILCRLRAREKALSPWAYRDTAMVLGLTVLLGTTWTLAFFSFGVFLLPQLFLFTIFNSLYGFFLFLWFCSQKRYSDAEAKAEMEAVSSSQMTH.

The first 23 residues, 1-23, serve as a signal peptide directing secretion; it reads MDPHGALFFYLCLLAAQVVLVET. The Extracellular portion of the chain corresponds to 24–246; it reads LSDLLVLMKR…PAELQVPLEY (223 aa). Asn-58, Asn-65, Asn-96, Asn-143, Asn-169, and Asn-175 each carry an N-linked (GlcNAc...) asparagine glycan. The 162-residue stretch at 74–235 folds into the GAIN-B domain; the sequence is QSLVFKLSCD…AVLMQLSGDP (162 aa). 2 disulfides stabilise this stretch: Cys-185–Cys-217 and Cys-205–Cys-219. A GPS region spans residues 185–235; the sequence is CVFWKEGASKSSWGAWSPEGCYTEQPSATQVLCHCNHLTYFAVLMQLSGDP. The interval 224-232 is stachel; that stretch reads YFAVLMQLS. A helical transmembrane segment spans residues 247-267; sequence ISFVGCSISIVASLLTILLYA. Residues 268 to 284 are Cytoplasmic-facing; it reads QSRKQSDSTTRIHMNLN. The helical transmembrane segment at 285 to 305 threads the bilayer; sequence GSVLLLNVTFLLSSQMTLPTM. At 306 to 319 the chain is on the extracellular side; sequence PRPVCKVLAAVLHY. Residues Cys-310 and Cys-400 are joined by a disulfide bond. A helical membrane pass occupies residues 320 to 340; that stretch reads ALLSSLTWMAIEGFNLYLFLG. The Cytoplasmic portion of the chain corresponds to 341-351; sequence RVYNAYIRRYL. Residues 352–372 traverse the membrane as a helical segment; the sequence is LKLCMLGWGFPALLVLLLLMI. The Extracellular segment spans residues 373 to 413; sequence KSSVYGPCVTSLSKSQENGTGFQNVSMCWIRSPMVHSILVM. Residues Asn-390 and Asn-396 are each glycosylated (N-linked (GlcNAc...) asparagine). The helical transmembrane segment at 414 to 434 threads the bilayer; that stretch reads GYGGFTSLFNLVVLAWALWIL. At 435-453 the chain is on the cytoplasmic side; it reads CRLRAREKALSPWAYRDTA. A helical membrane pass occupies residues 454–476; the sequence is MVLGLTVLLGTTWTLAFFSFGVF. Topologically, residues 477-480 are extracellular; it reads LLPQ. The helical transmembrane segment at 481-500 threads the bilayer; that stretch reads LFLFTIFNSLYGFFLFLWFC. Topologically, residues 501 to 524 are cytoplasmic; the sequence is SQKRYSDAEAKAEMEAVSSSQMTH.

The protein belongs to the G-protein coupled receptor 2 family. Adhesion G-protein coupled receptor (ADGR) subfamily. As to quaternary structure, heterodimer of 2 chains generated by proteolytic processing; the large extracellular N-terminal fragment and the membrane-bound C-terminal fragment predominantly remain associated and non-covalently linked. Post-translationally, autoproteolytically processed at the GPS region of the GAIN-B domain; this cleavage modulates receptor activity. In terms of tissue distribution, expressed at least in kidney, heart, brain and spleen. As to expression, isoform 1 is predominant in spleen. In the kidney, both isoform 1 and isoform 2 are expressed at similar levels. Isoform 2 is the major form in heart and brain. In the kidney, both isoform 1 and isoform 2 are expressed at similar levels.

The protein localises to the cell membrane. Its activity is regulated as follows. Forms a heterodimer of 2 chains generated by proteolytic processing that remain associated through non-covalent interactions mediated by the GAIN-B domain. In the inactivated receptor, the Stachel sequence (also named stalk) is embedded in the GAIN-B domain, where it adopts a beta-strand conformation. On activation, the Stachel moves into the 7 transmembrane region and adopts a twisted hook-shaped configuration that forms contacts within the receptor, leading to coupling of a G-alpha protein, which activates signaling. The cleaved GAIN-B and N-terminal domains can then dissociate from the rest of the receptor. Functionally, orphan adhesion G-protein coupled receptor (aGPCR). Ligand binding causes a conformation change that triggers signaling via guanine nucleotide-binding proteins (G proteins) and modulates the activity of downstream effectors, such as adenylate cyclase. ADGRG5 is specifically coupled to G(s) G proteins and mediates activation of adenylate cyclase activity. In terms of biological role, isoform 1, but not isoform 2, is constitutively active, as evidenced by elevated basal cAMP levels, and responds to mechanical activation (shaking). The polypeptide is Adhesion G-protein coupled receptor G5 (Mus musculus (Mouse)).